A 384-amino-acid chain; its full sequence is S-adenosylmethionine synthase (384 aa).

His15 serves as a coordination point for ATP. Asp17 contributes to the Mg(2+) binding site. Glu43 lines the K(+) pocket. Positions 56 and 99 each coordinate L-methionine. A flexible loop region spans residues 99-109 (QSPDINQGVDR). Residues 164–166 (DAK), 230–231 (RF), Asp239, 245–246 (RK), Ala262, and Lys266 each bind ATP. Asp239 serves as a coordination point for L-methionine. Residue Lys270 coordinates L-methionine.

This sequence belongs to the AdoMet synthase family. As to quaternary structure, homotetramer; dimer of dimers. Mg(2+) is required as a cofactor. Requires K(+) as cofactor.

The protein localises to the cytoplasm. It catalyses the reaction L-methionine + ATP + H2O = S-adenosyl-L-methionine + phosphate + diphosphate. It participates in amino-acid biosynthesis; S-adenosyl-L-methionine biosynthesis; S-adenosyl-L-methionine from L-methionine: step 1/1. Catalyzes the formation of S-adenosylmethionine (AdoMet) from methionine and ATP. The overall synthetic reaction is composed of two sequential steps, AdoMet formation and the subsequent tripolyphosphate hydrolysis which occurs prior to release of AdoMet from the enzyme. This chain is S-adenosylmethionine synthase, found in Citrobacter koseri (strain ATCC BAA-895 / CDC 4225-83 / SGSC4696).